A 78-amino-acid chain; its full sequence is Exodeoxyribonuclease 7 small subunit (78 aa).

The protein belongs to the XseB family. As to quaternary structure, heterooligomer composed of large and small subunits.

Its subcellular location is the cytoplasm. The enzyme catalyses Exonucleolytic cleavage in either 5'- to 3'- or 3'- to 5'-direction to yield nucleoside 5'-phosphates.. Functionally, bidirectionally degrades single-stranded DNA into large acid-insoluble oligonucleotides, which are then degraded further into small acid-soluble oligonucleotides. The chain is Exodeoxyribonuclease 7 small subunit from Desulfitobacterium hafniense (strain Y51).